A 103-amino-acid chain; its full sequence is Large ribosomal subunit protein bL21 (103 aa).

The span at 83-92 (YRRKKGHRQP) shows a compositional bias: basic residues. A disordered region spans residues 83–103 (YRRKKGHRQPFSRVTVEKIEA).

This sequence belongs to the bacterial ribosomal protein bL21 family. As to quaternary structure, part of the 50S ribosomal subunit. Contacts protein L20.

Functionally, this protein binds to 23S rRNA in the presence of protein L20. This is Large ribosomal subunit protein bL21 from Pelotomaculum thermopropionicum (strain DSM 13744 / JCM 10971 / SI).